Consider the following 101-residue polypeptide: Large ribosomal subunit protein uL24 (101 aa).

It belongs to the universal ribosomal protein uL24 family. As to quaternary structure, part of the 50S ribosomal subunit.

One of two assembly initiator proteins, it binds directly to the 5'-end of the 23S rRNA, where it nucleates assembly of the 50S subunit. Functionally, one of the proteins that surrounds the polypeptide exit tunnel on the outside of the subunit. The polypeptide is Large ribosomal subunit protein uL24 (Streptococcus pyogenes serotype M1).